Consider the following 184-residue polypeptide: NADH-quinone oxidoreductase subunit B (184 aa).

Residues C37, C38, C103, and C132 each contribute to the [4Fe-4S] cluster site.

Belongs to the complex I 20 kDa subunit family. NDH-1 is composed of 14 different subunits. Subunits NuoB, C, D, E, F, and G constitute the peripheral sector of the complex. It depends on [4Fe-4S] cluster as a cofactor.

Its subcellular location is the cell membrane. It carries out the reaction a quinone + NADH + 5 H(+)(in) = a quinol + NAD(+) + 4 H(+)(out). Its function is as follows. NDH-1 shuttles electrons from NADH, via FMN and iron-sulfur (Fe-S) centers, to quinones in the respiratory chain. The immediate electron acceptor for the enzyme in this species is believed to be a menaquinone. Couples the redox reaction to proton translocation (for every two electrons transferred, four hydrogen ions are translocated across the cytoplasmic membrane), and thus conserves the redox energy in a proton gradient. The polypeptide is NADH-quinone oxidoreductase subunit B (Rhodococcus opacus (strain B4)).